The following is a 405-amino-acid chain: Argininosuccinate synthase (405 aa).

Ala11 to Ser19 serves as a coordination point for ATP. Tyr90 contacts L-citrulline. An ATP-binding site is contributed by Gly119. The L-aspartate site is built by Thr121, Asn125, and Asp126. L-citrulline is bound at residue Asn125. L-citrulline is bound by residues Arg129, Ser178, Ser187, Glu263, and Tyr275.

This sequence belongs to the argininosuccinate synthase family. Type 1 subfamily. Homotetramer.

Its subcellular location is the cytoplasm. It catalyses the reaction L-citrulline + L-aspartate + ATP = 2-(N(omega)-L-arginino)succinate + AMP + diphosphate + H(+). Its pathway is amino-acid biosynthesis; L-arginine biosynthesis; L-arginine from L-ornithine and carbamoyl phosphate: step 2/3. This Legionella pneumophila (strain Paris) protein is Argininosuccinate synthase.